We begin with the raw amino-acid sequence, 410 residues long: Centromere protein U (410 aa).

Positions 1–72 are disordered; the sequence is MAARRSLRYS…YETFDPPLHS (72 aa). The Nuclear localization signal motif lies at 4-21; sequence RRSLRYSGDPGAKRSRNT. Residues 28-38 are compositionally biased toward basic residues; the sequence is RKQKAGQKPKR. Residue threonine 73 is modified to Phosphothreonine; by PLK1. Positions 87–228 are disordered; it reads SSTSPATHRG…THSDASESMH (142 aa). A compositionally biased stretch (polar residues) spans 101-115; sequence NLNPSENEASGNDSI. A phosphoserine mark is found at serine 105, serine 110, serine 114, serine 130, serine 133, and serine 135. Positions 138-149 are enriched in basic and acidic residues; that stretch reads DNVRRSVSIERP. A compositionally biased stretch (low complexity) spans 158-169; the sequence is PAAASSSSSPSE. Residue lysine 179 forms a Glycyl lysine isopeptide (Lys-Gly) (interchain with G-Cter in SUMO2) linkage. Serine 186 carries the phosphoserine modification. Threonine 191 is modified (phosphothreonine). Positions 200–218 are enriched in basic residues; the sequence is TQKKVRPSPGRRKRPRRGS. Position 224 is a phosphoserine (serine 224). The stretch at 289–352 forms a coiled coil; that stretch reads QMLKALKRKN…LKNSKHFLSN (64 aa). A Nuclear localization signal motif is present at residues 295–312; that stretch reads KRKNTKIISNMEKKRQRL.

Belongs to the CENP-U/AME1 family. Component of the CENPA-NAC complex, at least composed of CENPA, CENPC, CENPH, CENPM, CENPN, CENPT and CENPU. The CENPA-NAC complex interacts with the CENPA-CAD complex, composed of CENPI, CENPK, CENPL, CENPO, CENPP, CENPQ, CENPR and CENPS. Interacts with MLF1. Phosphorylated by PLK1 at Thr-73, creating a self-tethering site that specifically interacts with the polo-box domain of PLK1. Expressed at high levels in glioblastoma cell lines. Up-regulated in GBM (glioblastoma multiforme) tumors. Significantly increased in both the tumor core as well as the contralateral striatum and cortex in gliomas.

The protein localises to the cytoplasm. The protein resides in the nucleus. Its subcellular location is the chromosome. It is found in the centromere. It localises to the kinetochore. Functionally, component of the CENPA-NAC (nucleosome-associated) complex, a complex that plays a central role in assembly of kinetochore proteins, mitotic progression and chromosome segregation. The CENPA-NAC complex recruits the CENPA-CAD (nucleosome distal) complex and may be involved in incorporation of newly synthesized CENPA into centromeres. Plays an important role in the correct PLK1 localization to the mitotic kinetochores. A scaffold protein responsible for the initial recruitment and maintenance of the kinetochore PLK1 population until its degradation. Involved in transcriptional repression. The sequence is that of Centromere protein U (Cenpu) from Rattus norvegicus (Rat).